The sequence spans 342 residues: Heat-inducible transcription repressor HrcA (342 aa).

It belongs to the HrcA family.

Its function is as follows. Negative regulator of class I heat shock genes (grpE-dnaK-dnaJ and groELS operons). Prevents heat-shock induction of these operons. In Onion yellows phytoplasma (strain OY-M), this protein is Heat-inducible transcription repressor HrcA.